The following is a 288-amino-acid chain: Alpha-acetolactate decarboxylase (288 aa).

The N-terminal stretch at methionine 1–glycine 23 is a signal peptide.

The protein belongs to the alpha-acetolactate decarboxylase family.

The catalysed reaction is (2S)-2-acetolactate + H(+) = (R)-acetoin + CO2. It participates in polyol metabolism; (R,R)-butane-2,3-diol biosynthesis; (R,R)-butane-2,3-diol from pyruvate: step 2/3. In terms of biological role, converts acetolactate into acetoin. The sequence is that of Alpha-acetolactate decarboxylase from Methanosarcina mazei (strain ATCC BAA-159 / DSM 3647 / Goe1 / Go1 / JCM 11833 / OCM 88) (Methanosarcina frisia).